The following is a 174-amino-acid chain: Shikimate kinase 2 (174 aa).

12 to 17 contributes to the ATP binding site; it reads GCGKTT. Thr16 and Asp32 together coordinate Mg(2+). Residues Asp34, Arg58, and Gly79 each coordinate substrate. Residues 112-126 form an LID domain region; it reads QAAPEEDLRPTLTGK. Arg120 contributes to the ATP binding site. Position 139 (Arg139) interacts with substrate.

This sequence belongs to the shikimate kinase family. AroL subfamily. As to quaternary structure, monomer. Mg(2+) is required as a cofactor.

Its subcellular location is the cytoplasm. It carries out the reaction shikimate + ATP = 3-phosphoshikimate + ADP + H(+). It participates in metabolic intermediate biosynthesis; chorismate biosynthesis; chorismate from D-erythrose 4-phosphate and phosphoenolpyruvate: step 5/7. In terms of biological role, catalyzes the specific phosphorylation of the 3-hydroxyl group of shikimic acid using ATP as a cosubstrate. In Escherichia coli O7:K1 (strain IAI39 / ExPEC), this protein is Shikimate kinase 2.